We begin with the raw amino-acid sequence, 346 residues long: MKEKKDIRILAFESSCDETSTAVVKNGSEIESLVVATQIKSHARFGGVVPEVASRHHIEVITQITREALEEAKVSWEDLDAIAVTHGPGLVGALLIGINAAKAASMATGLPLIGVDHIMGHISAAQLVEPVEYPALALQVSGGHTEIALLKDPTHFEIVGDTRDDAAGEAYDKIGRVLGVNYPAGKTIDQWAHQGKDTFGFPRAMIDEDNYDFSFSGLKSAFINTCHHADQIGEKLDKYDLAASFQAAVVDVLAEKTVRAIRQYQPKTFIMGGGVAANLGLRERMNKEIAALEKAPKVILPPLKLCGDNAAMIGAAAYNQYLAGNFADLTLDADPSMELPYAEDYK.

Fe cation contacts are provided by His117 and His121. Substrate contacts are provided by residues 139 to 143 (QVSGG), Asp172, Gly185, Asp189, and Asn278. Asp308 contacts Fe cation.

This sequence belongs to the KAE1 / TsaD family. Fe(2+) is required as a cofactor.

It localises to the cytoplasm. The enzyme catalyses L-threonylcarbamoyladenylate + adenosine(37) in tRNA = N(6)-L-threonylcarbamoyladenosine(37) in tRNA + AMP + H(+). Its function is as follows. Required for the formation of a threonylcarbamoyl group on adenosine at position 37 (t(6)A37) in tRNAs that read codons beginning with adenine. Is involved in the transfer of the threonylcarbamoyl moiety of threonylcarbamoyl-AMP (TC-AMP) to the N6 group of A37, together with TsaE and TsaB. TsaD likely plays a direct catalytic role in this reaction. The polypeptide is tRNA N6-adenosine threonylcarbamoyltransferase (Lactobacillus delbrueckii subsp. bulgaricus (strain ATCC 11842 / DSM 20081 / BCRC 10696 / JCM 1002 / NBRC 13953 / NCIMB 11778 / NCTC 12712 / WDCM 00102 / Lb 14)).